The following is a 277-amino-acid chain: 3-methyl-2-oxobutanoate hydroxymethyltransferase (277 aa).

Mg(2+)-binding residues include aspartate 42 and aspartate 81. 3-methyl-2-oxobutanoate-binding positions include 42-43, aspartate 81, and lysine 110; that span reads DS. Glutamate 112 is a Mg(2+) binding site. The active-site Proton acceptor is the glutamate 179.

Belongs to the PanB family. As to quaternary structure, homodecamer; pentamer of dimers. Mg(2+) serves as cofactor.

It localises to the cytoplasm. It catalyses the reaction 3-methyl-2-oxobutanoate + (6R)-5,10-methylene-5,6,7,8-tetrahydrofolate + H2O = 2-dehydropantoate + (6S)-5,6,7,8-tetrahydrofolate. The protein operates within cofactor biosynthesis; (R)-pantothenate biosynthesis; (R)-pantoate from 3-methyl-2-oxobutanoate: step 1/2. Its function is as follows. Catalyzes the reversible reaction in which hydroxymethyl group from 5,10-methylenetetrahydrofolate is transferred onto alpha-ketoisovalerate to form ketopantoate. The chain is 3-methyl-2-oxobutanoate hydroxymethyltransferase from Anaplasma marginale (strain Florida).